The following is a 489-amino-acid chain: Probable transporter MCH1 (489 aa).

The next 12 membrane-spanning stretches (helical) occupy residues 34–54, 68–88, 94–114, 124–144, 156–175, 196–216, 262–282, 302–324, 335–355, 359–379, 403–423, and 463–483; these read ISLI…FTPV, IIGS…GYLA, VLLS…AATV, LAIS…TALL, LTIS…GSRV, FSFL…VVSI, ISTY…EMYI, VAIH…DFLV, LLSI…STFV, YYII…LYPT, IGST…CGVF, and SLII…ILRI.

Belongs to the major facilitator superfamily.

The protein localises to the vacuole membrane. Probable transporter. The sequence is that of Probable transporter MCH1 (MCH1) from Wickerhamomyces anomalus (Yeast).